The primary structure comprises 690 residues: MPRQISLEKTRNIGIMAHIDAGKTTTTERILFYAGKIRKVAETHEGGAQMDWMEQEKERGITITSAATTCQWKEHKVNIIDTPGHVDFTVEVERSLRVLDGSVAVFCAKGGVQPQSETVWRQADKYRVPRMAFINKMDILGADFYQTIGMIKDRLGTNPVPLQLPIGKEDTFVGIVDLIKMNAVIYKDDLGQDMETTEIPEDMKELAREYREKLVEAAAETDEELMMKYLEGEELTEEEIVAGIRRGTVNVQFTPVICGSSYKNKGVQLLLDAVVAYMPSPLDIPAIKGITPDDEEEVERHSDDNEPFSALAFKIMADPYVGKLAFFRVYSGVLDAGSHVLNSTKGKRERIGRILQMHANTREEVSTVYAGDIAAAVGLKDTTTGDTLCDPDHVVILESMVFPEPVIHVAVEPKTKAGQEKMGIALQKLAEEDPTFKTYTDEETGQTIIAGMGELHLEIIVDRLLREFKVEANVGKPQVAYKETITQAVEVECKYARQSGGRGQYGHVKIRVIPQEPGKGYEFANQVVGGTIPKEYIPAVDAGIQGAMQAGVLGGYEVVDVRVELYDGSYHDVDSSEMAFKIAGSMAFKDGMRKGKAVLLEPYMKVEVTTPEDYMGEVIGDLNSRRGKIEGMEARSNGMQVINAYVPLSEMFGYATDLRSKTQGRATYSMHFDHYEAVPASIAEKITASK.

One can recognise a tr-type G domain in the interval 8–282 (EKTRNIGIMA…AVVAYMPSPL (275 aa)). Residues 17-24 (AHIDAGKT), 81-85 (DTPGH), and 135-138 (NKMD) contribute to the GTP site.

Belongs to the TRAFAC class translation factor GTPase superfamily. Classic translation factor GTPase family. EF-G/EF-2 subfamily.

It is found in the cytoplasm. Functionally, catalyzes the GTP-dependent ribosomal translocation step during translation elongation. During this step, the ribosome changes from the pre-translocational (PRE) to the post-translocational (POST) state as the newly formed A-site-bound peptidyl-tRNA and P-site-bound deacylated tRNA move to the P and E sites, respectively. Catalyzes the coordinated movement of the two tRNA molecules, the mRNA and conformational changes in the ribosome. This chain is Elongation factor G, found in Alkaliphilus oremlandii (strain OhILAs) (Clostridium oremlandii (strain OhILAs)).